Reading from the N-terminus, the 629-residue chain is tRNA uridine 5-carboxymethylaminomethyl modification enzyme MnmG (629 aa).

FAD is bound by residues Gly14–Gly19, Val126, and Ser181. Gly273–Phe287 contacts NAD(+). Gln370 is a binding site for FAD.

Belongs to the MnmG family. As to quaternary structure, homodimer. Heterotetramer of two MnmE and two MnmG subunits. The cofactor is FAD.

It localises to the cytoplasm. In terms of biological role, NAD-binding protein involved in the addition of a carboxymethylaminomethyl (cmnm) group at the wobble position (U34) of certain tRNAs, forming tRNA-cmnm(5)s(2)U34. In Bacillus mycoides (strain KBAB4) (Bacillus weihenstephanensis), this protein is tRNA uridine 5-carboxymethylaminomethyl modification enzyme MnmG.